A 115-amino-acid polypeptide reads, in one-letter code: Phosphorelay protein LuxU (115 aa).

Residues 17 to 107 (GADNVPVLLE…DRLHQTQQAY (91 aa)) form the HPt domain. Residue histidine 56 is modified to Phosphohistidine.

As to quaternary structure, monomer.

In terms of biological role, phosphorelay protein which receives a sensory signal from a sensor kinase and transmit it to LuxO. At low cell density, a phosphoryl group is transferred from the sensor kinase, probably on His-56 and this phosphoryl group is further transferred to LuxO. This chain is Phosphorelay protein LuxU (luxU), found in Vibrio vulnificus (strain CMCP6).